The chain runs to 46 residues: Pape peptide (46 aa).

Residues 1–10 are compositionally biased toward low complexity; the sequence is KQLLKEALAP. Residues 1–46 are disordered; the sequence is KQLLKEALAPEPAPKPAPEPAPEPAPEPAPEAAPEPAAAAPEAAPE. Residues 11–33 show a composition bias toward pro residues; the sequence is EPAPKPAPEPAPEPAPEPAPEAA. PAPE repeat units follow at residues 16-19, 20-23, 24-27, and 28-31; these read PAPE. Over residues 34 to 46 the composition is skewed to low complexity; the sequence is PEPAAAAPEAAPE.

Expressed by the venom gland.

The protein resides in the secreted. In Tityus stigmurus (Brazilian scorpion), this protein is Pape peptide.